Consider the following 197-residue polypeptide: Holliday junction branch migration complex subunit RuvA (197 aa).

Residues 1–64 are domain I; that stretch reads MYDYIKGIYK…DDSINLYGFF (64 aa). The segment at 65-143 is domain II; it reads TEEERDMFNL…NDDIISDIDD (79 aa). A flexible linker region spans residues 144-154; it reads LDSISNFQLHS. The domain III stretch occupies residues 154 to 197; that stretch reads SAEALEALMSLGYSQKESEKALKNVDKENSLEDIIKACLKYLMG.

The protein belongs to the RuvA family. As to quaternary structure, homotetramer. Forms an RuvA(8)-RuvB(12)-Holliday junction (HJ) complex. HJ DNA is sandwiched between 2 RuvA tetramers; dsDNA enters through RuvA and exits via RuvB. An RuvB hexamer assembles on each DNA strand where it exits the tetramer. Each RuvB hexamer is contacted by two RuvA subunits (via domain III) on 2 adjacent RuvB subunits; this complex drives branch migration. In the full resolvosome a probable DNA-RuvA(4)-RuvB(12)-RuvC(2) complex forms which resolves the HJ.

It localises to the cytoplasm. The RuvA-RuvB-RuvC complex processes Holliday junction (HJ) DNA during genetic recombination and DNA repair, while the RuvA-RuvB complex plays an important role in the rescue of blocked DNA replication forks via replication fork reversal (RFR). RuvA specifically binds to HJ cruciform DNA, conferring on it an open structure. The RuvB hexamer acts as an ATP-dependent pump, pulling dsDNA into and through the RuvAB complex. HJ branch migration allows RuvC to scan DNA until it finds its consensus sequence, where it cleaves and resolves the cruciform DNA. The polypeptide is Holliday junction branch migration complex subunit RuvA (Clostridium tetani (strain Massachusetts / E88)).